Consider the following 215-residue polypeptide: uncharacterized protein (215 aa).

This is an uncharacterized protein from Acanthamoeba polyphaga (Amoeba).